Here is a 273-residue protein sequence, read N- to C-terminus: DnaJ homolog subfamily C member 27 (273 aa).

Residues 1–18 are required for interaction with MAPK1; the sequence is MEASMPKRKEPGKSLRIK. Residues 23–30, 71–75, and 134–137 each bind GTP; these read GNAEVGKS, DMAGD, and NKID. In terms of domain architecture, J spans 217–273; sequence DSWDMLGVKPGASRDEVNKAYRKLAVLLHPDKCVAPGSEDAFKAVVNARTALLKNIK.

It belongs to the small GTPase superfamily. Rab family. As to quaternary structure, interacts directly with MAPK1 (wild-type and kinase-deficient forms). Interacts directly (in GTP-bound form) with MAP2K1 (wild-type and kinase-deficient forms).

Its subcellular location is the nucleus. Functionally, GTPase which can activate the MEK/ERK pathway and induce cell transformation when overexpressed. May act as a nuclear scaffold for MAPK1, probably by association with MAPK1 nuclear export signal leading to enhanced ERK1/ERK2 signaling. This is DnaJ homolog subfamily C member 27 (DNAJC27) from Bos taurus (Bovine).